A 118-amino-acid chain; its full sequence is APTVALLLLCALCSAADAPPPPPSAAASADGAYHAGVRPAPTPRDRVEVRVGLSLAQLVSLDEKNEELTTKVYLDLSWWDPRLQWDPHDYGGLGGLRVAASRLWLPDIGLDNNNDGEF.

Positions 1-15 (APTVALLLLCALCSA) are cleaved as a signal peptide.

It belongs to the ligand-gated ion channel (TC 1.A.9) family. Acetylcholine receptor (TC 1.A.9.1) subfamily. Beta-1/CHRNB1 sub-subfamily. As to quaternary structure, pentamer of two alpha chains, and one each of the beta, delta, and gamma chains.

It localises to the postsynaptic cell membrane. The protein resides in the cell membrane. The enzyme catalyses K(+)(in) = K(+)(out). It carries out the reaction Na(+)(in) = Na(+)(out). After binding acetylcholine, the AChR responds by an extensive change in conformation that affects all subunits and leads to opening of an ion-conducting channel across the plasma membrane. This is Acetylcholine receptor subunit beta (CHRNB1) from Gallus gallus (Chicken).